Consider the following 154-residue polypeptide: Ubiquitin-conjugating enzyme E2 L3 (154 aa).

Residues 2 to 149 enclose the UBC core domain; it reads AASRRLMKEL…AEEFTKKYGE (148 aa). Residue C86 is the Glycyl thioester intermediate of the active site. An N6-acetyllysine modification is found at K131.

It belongs to the ubiquitin-conjugating enzyme family. In terms of assembly, interacts with PRKN; involved in ubiquitination and degradation of misfolded proteins. Interacts with UBE3A. Interacts with CCNB1IP1, CBL, ZAP70, RNF19A, RNF19B and RNF144B. Interacts with ARIH1. Interacts with ARIH2 (via RING-type 1). Interacts with NCOA1; they functionally interact to regulate progesterone receptor transcriptional activity. Interacts with NDFIP1 (via N-terminus); the interaction mediates recruitment of UBE2L3 to ITCH and causes MAP3K7 ubiquitination. Ubiquitinated. The alteration of UBE2L3 protein levels during the S-phase of the cell cycle is due to ubiquitin-dependent proteasomal degradation. Autoubiquitinated in vitro.

The protein localises to the nucleus. It localises to the cytoplasm. The catalysed reaction is S-ubiquitinyl-[E1 ubiquitin-activating enzyme]-L-cysteine + [E2 ubiquitin-conjugating enzyme]-L-cysteine = [E1 ubiquitin-activating enzyme]-L-cysteine + S-ubiquitinyl-[E2 ubiquitin-conjugating enzyme]-L-cysteine.. It functions in the pathway protein modification; protein ubiquitination. In terms of biological role, ubiquitin-conjugating enzyme E2 that specifically acts with HECT-type and RBR family E3 ubiquitin-protein ligases. Does not function with most RING-containing E3 ubiquitin-protein ligases because it lacks intrinsic E3-independent reactivity with lysine: in contrast, it has activity with the RBR family E3 enzymes, such as PRKN, RNF31 and ARIH1, that function like RING-HECT hybrids. Accepts ubiquitin from the E1 complex and catalyzes its covalent attachment to other proteins. Mediates ubiquitination by the CUL9-RBX1 complex. In vitro catalyzes 'Lys-11'-linked polyubiquitination. Involved in the selective degradation of short-lived and abnormal proteins. Down-regulated during the S-phase it is involved in progression through the cell cycle. Regulates nuclear hormone receptors transcriptional activity. May play a role in myelopoiesis. The sequence is that of Ubiquitin-conjugating enzyme E2 L3 (UBE2L3) from Pongo abelii (Sumatran orangutan).